A 306-amino-acid chain; its full sequence is Ornithine carbamoyltransferase (306 aa).

Residues 46–49 (STRT), glutamine 73, arginine 97, and 124–127 (HPTQ) contribute to the carbamoyl phosphate site. L-ornithine contacts are provided by residues asparagine 156, aspartate 220, and 224 to 225 (SM). Carbamoyl phosphate is bound by residues 260 to 261 (CL) and arginine 288.

This sequence belongs to the aspartate/ornithine carbamoyltransferase superfamily. OTCase family.

Its subcellular location is the cytoplasm. The enzyme catalyses carbamoyl phosphate + L-ornithine = L-citrulline + phosphate + H(+). The protein operates within amino-acid degradation; L-arginine degradation via ADI pathway; carbamoyl phosphate from L-arginine: step 2/2. Its function is as follows. Reversibly catalyzes the transfer of the carbamoyl group from carbamoyl phosphate (CP) to the N(epsilon) atom of ornithine (ORN) to produce L-citrulline. The polypeptide is Ornithine carbamoyltransferase (Campylobacter jejuni subsp. jejuni serotype O:6 (strain 81116 / NCTC 11828)).